The sequence spans 422 residues: Dihydrofolate synthase/folylpolyglutamate synthase (422 aa).

Residue D29 to G31 participates in 7,8-dihydropteroate binding. G59–T62 contributes to the ATP binding site. A Mg(2+)-binding site is contributed by S83. Residue T122–E125 participates in 7,8-dihydropteroate binding. A Mg(2+)-binding site is contributed by E146. L153–A155 contacts 7,8-dihydropteroate. H173 contributes to the Mg(2+) binding site. K188 is modified (N6-carboxylysine). Residues N257, R289, and D302 each contribute to the ATP site.

This sequence belongs to the folylpolyglutamate synthase family. Monomer. The cofactor is Mg(2+).

It carries out the reaction 7,8-dihydropteroate + L-glutamate + ATP = 7,8-dihydrofolate + ADP + phosphate + H(+). The catalysed reaction is (6S)-5,6,7,8-tetrahydrofolyl-(gamma-L-Glu)(n) + L-glutamate + ATP = (6S)-5,6,7,8-tetrahydrofolyl-(gamma-L-Glu)(n+1) + ADP + phosphate + H(+). The enzyme catalyses 10-formyltetrahydrofolyl-(gamma-L-Glu)(n) + L-glutamate + ATP = 10-formyltetrahydrofolyl-(gamma-L-Glu)(n+1) + ADP + phosphate + H(+). It catalyses the reaction (6R)-5,10-methylenetetrahydrofolyl-(gamma-L-Glu)(n) + L-glutamate + ATP = (6R)-5,10-methylenetetrahydrofolyl-(gamma-L-Glu)(n+1) + ADP + phosphate + H(+). It participates in cofactor biosynthesis; tetrahydrofolate biosynthesis; 7,8-dihydrofolate from 2-amino-4-hydroxy-6-hydroxymethyl-7,8-dihydropteridine diphosphate and 4-aminobenzoate: step 2/2. Its pathway is cofactor biosynthesis; tetrahydrofolylpolyglutamate biosynthesis. In terms of biological role, functions in two distinct reactions of the de novo folate biosynthetic pathway. Catalyzes the addition of a glutamate residue to dihydropteroate (7,8-dihydropteroate or H2Pte) to form dihydrofolate (7,8-dihydrofolate monoglutamate or H2Pte-Glu). Also catalyzes successive additions of L-glutamate to tetrahydrofolate or 10-formyltetrahydrofolate or 5,10-methylenetetrahydrofolate, leading to folylpolyglutamate derivatives. This Escherichia coli (strain K12) protein is Dihydrofolate synthase/folylpolyglutamate synthase.